A 91-amino-acid chain; its full sequence is Mercuric transport protein periplasmic component (91 aa).

A signal peptide spans 1 to 19 (MKKLFASLAIAAVVAPVWA). One can recognise an HMA domain in the interval 22–88 (QTVTLSVPGM…ATEDAGYPSS (67 aa)). The Hg(2+) site is built by C33 and C36.

The protein belongs to the MerP family. Monomer.

The protein resides in the periplasm. Its function is as follows. Involved in mercury resistance. Acts as a mercury scavenger that specifically binds to a mercuric ion in the periplasm and probably passes it to the cytoplasmic mercuric reductase MerA via the mercuric transport protein MerT. This chain is Mercuric transport protein periplasmic component, found in Serratia marcescens.